The chain runs to 1287 residues: FYVE zinc finger domain protein UPA1 (1287 aa).

The tract at residues 1 to 298 (MTIPDPANII…SSTSLSAPAE (298 aa)) is disordered. Low complexity predominate over residues 86 to 99 (DSSSFGSKPSSSAS). Residues 115–136 (WATSSTTSHPSKASQSTLSPNA) show a composition bias toward polar residues. Positions 128-144 (SQSTLSPNASVFKPSRS) match the PAM2 motif. 2 stretches are compositionally biased toward basic and acidic residues: residues 177 to 187 (RPDHAPLDHEQ) and 201 to 211 (KVEEQRGDHSI). Over residues 212–235 (PHQNGLVSAQAQTASDAVSTSKYT) the composition is skewed to polar residues. The short motif at 239 to 253 (ADQEEDQDDFVYPGA) is the PAM2L 1 element. Polar residues predominate over residues 255–294 (SPSSGQAAVQDEQQAVTDSQTTKSLTKQESDPEASSTSLS). ANK repeat units lie at residues 366-395 (NGLVPLHFAAKDGKTDIVRWLITQAGAIVE), 400-429 (EGETALHKAAMAGKLSVASLLLSHGADANA), 433-463 (DGWTALHNACSRGYLDLVRLLVDRGHAQIDV), and 468-497 (GAWTPLMNAASKGHLPVVRHLTAKYHADPF). Disordered regions lie at residues 582–630 (NGGK…VGLP), 643–697 (RVGP…ASAQ), 934–960 (REAAGLDEDEDEDAADDDDDEFIYPNS), and 977–1005 (TSGTLSRPSLSQRQSSAASMLRNSVAPSE). A compositionally biased stretch (polar residues) spans 674–695 (STPTPESVLQARRGTSSVNGAS). Positions 938–955 (GLDEDEDEDAADDDDDEF) are enriched in acidic residues. Positions 941–960 (EDEDEDAADDDDDEFIYPNS) match the PAM2L 2 motif. Residues 981 to 995 (LSRPSLSQRQSSAAS) are compositionally biased toward low complexity. The FYVE-type zinc finger occupies 1055–1129 (DEEAKDCIGC…VCNGCHAELQ (75 aa)). The Zn(2+) site is built by Cys-1061, Cys-1064, Cys-1077, Cys-1080, Cys-1085, Cys-1088, Cys-1121, and Cys-1124. An RING-type; atypical zinc finger spans residues 1243–1283 (CSICMEDFVANSTIARLPCLCYFHRGCIDSWFKRGRECPVH).

Belongs to the UPA1 PAM2 domain-binding protein family. Part of large ribonucleoprotein complexes (mRNPs) containing RNA-binding proteins RRM4 and PAB1, endosome-binding protein UPA1, core scaffold protein UPA2 and associated factor GRP1. Interacts (via PAM2 motif) with PAB1 (via PABC domain). Interacts (via PAM2L motifs) with RRM4.

It is found in the cytoplasm. Its subcellular location is the cytoskeleton. The protein localises to the endosome. Functionally, FYVE zinc finger domain protein that functions in endosomal targeting and transport of mRNAs, as well as associated ribosomes. The endosomal mRNA transport regulates polarity of the infectious hyphae by transporting a broad spectrum of cargo mRNAs from the nucleus to cell poles. Involved in chitinase CTS1 secretion. Dispensable for general endosomal functions but crucial for endosomal recruitment of RRM4. The protein is FYVE zinc finger domain protein UPA1 of Mycosarcoma maydis (Corn smut fungus).